Reading from the N-terminus, the 255-residue chain is 5-oxoprolinase subunit A 2 (255 aa).

Belongs to the LamB/PxpA family. Forms a complex composed of PxpA, PxpB and PxpC.

It catalyses the reaction 5-oxo-L-proline + ATP + 2 H2O = L-glutamate + ADP + phosphate + H(+). Catalyzes the cleavage of 5-oxoproline to form L-glutamate coupled to the hydrolysis of ATP to ADP and inorganic phosphate. The sequence is that of 5-oxoprolinase subunit A 2 from Agrobacterium fabrum (strain C58 / ATCC 33970) (Agrobacterium tumefaciens (strain C58)).